The primary structure comprises 40 residues: Natriuretic peptide PtNP-a (40 aa).

A disulfide bond links C9 and C25. Polar residues predominate over residues 17 to 34; the sequence is ISNTSGMGCRNPIQNRPK. The interval 17-40 is disordered; sequence ISNTSGMGCRNPIQNRPKSTPGGS.

It belongs to the natriuretic peptide family. As to expression, expressed by the venom gland.

It is found in the secreted. Snake venom natriuretic peptide that targets NPR1 and possibly NPR2. Exhibits hypotensive and vasodepressor activities. Recombinant PtNP-a demonstrates a dose-dependent stimulation of cGMP production via the natriuretic peptide receptor 1 (NPR1) (EC(50)=563 nM) in Madine Darby Canine Kidney (MDCK) cells. It also inhibits the angiotensin converting enzyme (ACE). In Pseudonaja textilis (Eastern brown snake), this protein is Natriuretic peptide PtNP-a.